Here is a 428-residue protein sequence, read N- to C-terminus: Elongation factor 1-alpha (428 aa).

Residues 5–217 (KPHVNIVFIG…DQIPEPEKPI (213 aa)) form the tr-type G domain. The interval 14-21 (GHVDHGKS) is G1. 14–21 (GHVDHGKS) is a binding site for GTP. Ser21 is a binding site for Mg(2+). The segment at 68–72 (GITID) is G2. Positions 89–92 (DAPG) are G3. Residues 89 to 93 (DAPGH) and 144 to 147 (NKMD) contribute to the GTP site. The interval 144-147 (NKMD) is G4. A G5 region spans residues 181-183 (SAW).

Belongs to the TRAFAC class translation factor GTPase superfamily. Classic translation factor GTPase family. EF-Tu/EF-1A subfamily.

The protein localises to the cytoplasm. The enzyme catalyses GTP + H2O = GDP + phosphate + H(+). GTP hydrolase that promotes the GTP-dependent binding of aminoacyl-tRNA to the A-site of ribosomes during protein biosynthesis. The polypeptide is Elongation factor 1-alpha (Pyrococcus horikoshii (strain ATCC 700860 / DSM 12428 / JCM 9974 / NBRC 100139 / OT-3)).